Here is a 457-residue protein sequence, read N- to C-terminus: Bifunctional protein GlmU (457 aa).

The segment at 1 to 230 is pyrophosphorylase; sequence MSKRYAVVLA…FEESLGVNDR (230 aa). UDP-N-acetyl-alpha-D-glucosamine contacts are provided by residues 9–12, Lys-23, Gln-73, and 78–79; these read LAAG and GT. A Mg(2+)-binding site is contributed by Asp-103. Positions 140, 155, 170, and 228 each coordinate UDP-N-acetyl-alpha-D-glucosamine. Asn-228 contacts Mg(2+). Residues 231-251 form a linker region; the sequence is IALAEASKLMQRRINENHMRN. The tract at residues 252-457 is N-acetyltransferase; it reads GVTLVNPEST…GYAKHLNHSK (206 aa). 2 residues coordinate UDP-N-acetyl-alpha-D-glucosamine: Arg-333 and Lys-351. His-363 (proton acceptor) is an active-site residue. UDP-N-acetyl-alpha-D-glucosamine-binding residues include Tyr-366 and Asn-377. Acetyl-CoA-binding positions include 386–387, Ala-423, and Arg-440; that span reads NY.

The protein in the N-terminal section; belongs to the N-acetylglucosamine-1-phosphate uridyltransferase family. This sequence in the C-terminal section; belongs to the transferase hexapeptide repeat family. Homotrimer. It depends on Mg(2+) as a cofactor.

The protein resides in the cytoplasm. It catalyses the reaction alpha-D-glucosamine 1-phosphate + acetyl-CoA = N-acetyl-alpha-D-glucosamine 1-phosphate + CoA + H(+). The enzyme catalyses N-acetyl-alpha-D-glucosamine 1-phosphate + UTP + H(+) = UDP-N-acetyl-alpha-D-glucosamine + diphosphate. It functions in the pathway nucleotide-sugar biosynthesis; UDP-N-acetyl-alpha-D-glucosamine biosynthesis; N-acetyl-alpha-D-glucosamine 1-phosphate from alpha-D-glucosamine 6-phosphate (route II): step 2/2. Its pathway is nucleotide-sugar biosynthesis; UDP-N-acetyl-alpha-D-glucosamine biosynthesis; UDP-N-acetyl-alpha-D-glucosamine from N-acetyl-alpha-D-glucosamine 1-phosphate: step 1/1. The protein operates within bacterial outer membrane biogenesis; LPS lipid A biosynthesis. Functionally, catalyzes the last two sequential reactions in the de novo biosynthetic pathway for UDP-N-acetylglucosamine (UDP-GlcNAc). The C-terminal domain catalyzes the transfer of acetyl group from acetyl coenzyme A to glucosamine-1-phosphate (GlcN-1-P) to produce N-acetylglucosamine-1-phosphate (GlcNAc-1-P), which is converted into UDP-GlcNAc by the transfer of uridine 5-monophosphate (from uridine 5-triphosphate), a reaction catalyzed by the N-terminal domain. This is Bifunctional protein GlmU from Listeria monocytogenes serovar 1/2a (strain ATCC BAA-679 / EGD-e).